The chain runs to 447 residues: N-succinylarginine dihydrolase (447 aa).

Residues 19-28 (AGLSFGNVAS), Asn-110, and 137-138 (HR) each bind substrate. Glu-174 is an active-site residue. Substrate is bound at residue Arg-214. His-250 is an active-site residue. Substrate contacts are provided by Asp-252 and Asn-364. The active-site Nucleophile is the Cys-370.

Belongs to the succinylarginine dihydrolase family. Homodimer.

The enzyme catalyses N(2)-succinyl-L-arginine + 2 H2O + 2 H(+) = N(2)-succinyl-L-ornithine + 2 NH4(+) + CO2. The protein operates within amino-acid degradation; L-arginine degradation via AST pathway; L-glutamate and succinate from L-arginine: step 2/5. Its function is as follows. Catalyzes the hydrolysis of N(2)-succinylarginine into N(2)-succinylornithine, ammonia and CO(2). The chain is N-succinylarginine dihydrolase from Idiomarina loihiensis (strain ATCC BAA-735 / DSM 15497 / L2-TR).